The following is a 671-amino-acid chain: Preterminal protein (671 aa).

The Nuclear localization signal signature appears at 380 to 389 (RLPVRRRRRR). Residues 386 to 409 (RRRRVPPPPPPPEEEEEGEALMEE) are disordered. Positions 397–409 (PEEEEEGEALMEE) are enriched in acidic residues. Position 580 is an O-(5'-phospho-DNA)-serine (serine 580). Positions 645–671 (GADVPLPPLPAGPEPPLPPGARPRHRF) are disordered. A compositionally biased stretch (pro residues) spans 649–665 (PLPPLPAGPEPPLPPGA).

The protein belongs to the adenoviridae terminal protein family. In terms of assembly, heterodimer with the polymerase; this heterodimer binds to bp 9 to 18 of the genome. Interacts with host POU2F1; POU2F1 binds to the auxiliary sequences in the inverted terminal repeats and tethers the pTP-POL heterodimer to the origin DNA thereby participating in the assembly of the pre-initiation complex (POL-TP-DBP-NFIA-POU2F1). Preterminal protein is used to replicate viral genome, upon genomic encapsidation it is processed first into iTP and finally into TP by adenovirus protease.

It is found in the host nucleus matrix. Protein covalently bound to the viral DNA that acts as a primer for viral genomic replication by DNA strand displacement. Assembles on the viral origin of replication in an initiation complex with viral polymerase, DBP, host NFIA and host POU2F1/OCT1. During initiation, the polymerase covalently couples the first dCTP with Ser-580 of pTP. The terminal protein stimulates the template activity over 20 fold compared to protein-free templates. Neo-synthesized viral genomes are linked to two preterminal proteins, one for each 5' end. These new genomes are encapsidated in the nucleus, and during capsid maturation by viral protease, preterminal protein is first cleaved into intermediary (iTP), then into mature TP. May play a role in host nuclear matrix localization of genomic DNA. The polypeptide is Preterminal protein (Homo sapiens (Human)).